The primary structure comprises 511 residues: ATP synthase subunit alpha, plastid (511 aa).

170-177 is an ATP binding site; the sequence is GDRQTGKT.

It belongs to the ATPase alpha/beta chains family. As to quaternary structure, F-type ATPases have 2 components, CF(1) - the catalytic core - and CF(0) - the membrane proton channel. CF(1) has five subunits: alpha(3), beta(3), gamma(1), delta(1), epsilon(1). CF(0) has four main subunits: a, b, b' and c.

It localises to the plastid membrane. The enzyme catalyses ATP + H2O + 4 H(+)(in) = ADP + phosphate + 5 H(+)(out). Its function is as follows. Produces ATP from ADP in the presence of a proton gradient across the membrane. The alpha chain is a regulatory subunit. This Cuscuta reflexa (Southern Asian dodder) protein is ATP synthase subunit alpha, plastid.